Consider the following 677-residue polypeptide: Methionine--tRNA ligase (677 aa).

The short motif at 14-24 (PYANGSIHLGH) is the 'HIGH' region element. Zn(2+)-binding residues include C145, C148, C158, and C161. A 'KMSKS' region motif is present at residues 331–335 (KMSKS). K334 contacts ATP. Residues 575 to 677 (AFAAVDLRIA…SGAKPGQRVK (103 aa)) enclose the tRNA-binding domain.

Belongs to the class-I aminoacyl-tRNA synthetase family. MetG type 1 subfamily. As to quaternary structure, homodimer. Requires Zn(2+) as cofactor.

It is found in the cytoplasm. The catalysed reaction is tRNA(Met) + L-methionine + ATP = L-methionyl-tRNA(Met) + AMP + diphosphate. Is required not only for elongation of protein synthesis but also for the initiation of all mRNA translation through initiator tRNA(fMet) aminoacylation. The polypeptide is Methionine--tRNA ligase (Pseudomonas aeruginosa (strain LESB58)).